Here is a 266-residue protein sequence, read N- to C-terminus: Undecaprenyl-diphosphatase (266 aa).

Helical transmembrane passes span 38-58 (SDMFNIVIQAGAILAVTIIYW), 80-100 (LIVAFLITAVLGLVVKKVLHF), 108-128 (PIAWALIIGGFWMIFAEWAAA), 136-156 (ITWLVAILVGIAQIVAGIFPG), 176-196 (AAATEFAFLVGIPTMYAASGY), 217-237 (IAFVVSTIVAFIAVKWLLAYI), and 245-265 (FAVYRIILGVLLLGMAATGLI).

This sequence belongs to the UppP family.

It localises to the cell inner membrane. It catalyses the reaction di-trans,octa-cis-undecaprenyl diphosphate + H2O = di-trans,octa-cis-undecaprenyl phosphate + phosphate + H(+). In terms of biological role, catalyzes the dephosphorylation of undecaprenyl diphosphate (UPP). Confers resistance to bacitracin. This Rhizobium leguminosarum bv. trifolii (strain WSM2304) protein is Undecaprenyl-diphosphatase.